A 462-amino-acid polypeptide reads, in one-letter code: Argininosuccinate lyase (462 aa).

Belongs to the lyase 1 family. Argininosuccinate lyase subfamily.

The protein localises to the cytoplasm. It carries out the reaction 2-(N(omega)-L-arginino)succinate = fumarate + L-arginine. It functions in the pathway amino-acid biosynthesis; L-arginine biosynthesis; L-arginine from L-ornithine and carbamoyl phosphate: step 3/3. This Bacillus cereus (strain ATCC 10987 / NRS 248) protein is Argininosuccinate lyase.